A 229-amino-acid polypeptide reads, in one-letter code: NAD(P)H-hydrate epimerase (229 aa).

The region spanning 10 to 224 is the YjeF N-terminal domain; that stretch reads SREVDQIAIE…DIGIPPALLD (215 aa). Residue 57 to 61 coordinates (6S)-NADPHX; sequence NNGGD. Positions 58 and 129 each coordinate K(+). (6S)-NADPHX-binding positions include 133-139 and D167; that span reads GTGIRGQ. A K(+)-binding site is contributed by S170.

Belongs to the NnrE/AIBP family. The cofactor is K(+).

It catalyses the reaction (6R)-NADHX = (6S)-NADHX. It carries out the reaction (6R)-NADPHX = (6S)-NADPHX. Its function is as follows. Catalyzes the epimerization of the S- and R-forms of NAD(P)HX, a damaged form of NAD(P)H that is a result of enzymatic or heat-dependent hydration. This is a prerequisite for the S-specific NAD(P)H-hydrate dehydratase to allow the repair of both epimers of NAD(P)HX. The sequence is that of NAD(P)H-hydrate epimerase from Rubinisphaera brasiliensis (strain ATCC 49424 / DSM 5305 / JCM 21570 / IAM 15109 / NBRC 103401 / IFAM 1448) (Planctomyces brasiliensis).